The chain runs to 629 residues: uncharacterized protein (629 aa).

Histidine 562 acts as the Proton acceptor in catalysis.

The protein belongs to the GMC oxidoreductase family. FAD serves as cofactor.

This is an uncharacterized protein from Mycobacterium tuberculosis (strain CDC 1551 / Oshkosh).